The following is a 457-amino-acid chain: Phenylalanine-4-hydroxylase (457 aa).

The 78-residue stretch at 31–108 folds into the ACT domain; it reads TIVFTLREKA…EKKVLVQDWN (78 aa). 3 residues coordinate Fe cation: histidine 285, histidine 290, and glutamate 330.

It belongs to the biopterin-dependent aromatic amino acid hydroxylase family. As to quaternary structure, homotetramer. The cofactor is Fe(2+). Expressed in the seam cells of the lateral hypodermis, in the ventral hypodermis and in the hyp7 hypodermal syncytium, in hypodermal cells in the tail and in body wall muscle cells (at protein level).

The protein localises to the cytoplasm. The enzyme catalyses (6R)-L-erythro-5,6,7,8-tetrahydrobiopterin + L-phenylalanine + O2 = (4aS,6R)-4a-hydroxy-L-erythro-5,6,7,8-tetrahydrobiopterin + L-tyrosine. The catalysed reaction is (6R)-L-erythro-5,6,7,8-tetrahydrobiopterin + L-tryptophan + O2 = 5-hydroxy-L-tryptophan + (4aS,6R)-4a-hydroxy-L-erythro-5,6,7,8-tetrahydrobiopterin. It participates in amino-acid degradation; L-phenylalanine degradation; acetoacetate and fumarate from L-phenylalanine: step 1/6. Its activity is regulated as follows. Inhibited by tetrahydrobiopterin. Unlike its mammalian orthologs, pah-1 does not exhibit allosteric binding behavior for phenylalanine. Functionally, catalyzes the hydroxylation of L-phenylalanine to L-tyrosine. Catalyzes the hydroxylation of tryptophan to 5-hydroxy-L-tryptophan. Plays a role in the biosynthesis of a melanin-like cuticle pigment. This chain is Phenylalanine-4-hydroxylase, found in Caenorhabditis elegans.